Consider the following 332-residue polypeptide: Arabinogalactan endo-beta-1,4-galactanase (332 aa).

An N-linked (GlcNAc...) asparagine glycan is attached at Asn111. The Proton donor role is filled by Glu135. Catalysis depends on Glu245, which acts as the Nucleophile.

This sequence belongs to the glycosyl hydrolase 53 family.

The enzyme catalyses The enzyme specifically hydrolyzes (1-&gt;4)-beta-D-galactosidic linkages in type I arabinogalactans.. This chain is Arabinogalactan endo-beta-1,4-galactanase, found in Humicola insolens (Soft-rot fungus).